Here is a 122-residue protein sequence, read N- to C-terminus: Large ribosomal subunit protein uL14c (122 aa).

Belongs to the universal ribosomal protein uL14 family. Part of the 50S ribosomal subunit.

The protein resides in the plastid. The protein localises to the chloroplast. In terms of biological role, binds to 23S rRNA. The chain is Large ribosomal subunit protein uL14c from Stigeoclonium helveticum (Green alga).